The sequence spans 330 residues: Short chain dehydrogenase macD (330 aa).

NADP(+) contacts are provided by Lys57, Asp86, Asn113, Tyr204, and Lys208. The active-site Proton donor is Tyr204. Residue Lys208 is the Lowers pKa of active site Tyr of the active site.

This sequence belongs to the short-chain dehydrogenases/reductases (SDR) family.

It functions in the pathway secondary metabolite biosynthesis; terpenoid biosynthesis. Functionally, short chain dehydrogenase; part of the gene cluster that mediates the biosynthesis of macrophorins, isoprenoid epoxycyclohexenones containing cyclized drimane moieties. The first step of the pathway is the synthesis of 6-methylsalicylic acid (6-MSA) by the polyketide synthase macA. 6-MSA is then converted to m-cresol by the decarboxylase macB. The cytochrome P450 monooxygenase macC then catalyzes the oxidation of m-cresol to toluquinol. Epoxidation of toluquinol is then performed by the short chain dehydrogenase macD, with the help of macE, and a further prenylation by macG leads to 7-deacetoxyyanuthone A. The next step is the hydroxylation of C-22 of 7-deacetoxyyanuthone A by the cytochrome P450 monooxygenase macH to yield 22-deacetylyanuthone A. O-Mevalon transferase macI then attaches mevalon to the hydroxyl group of 22-deacetylyanuthone A to produce yanuthone E. The terpene cyclase macJ catalyzes the cyclization of 22-deacetylyanuthone A to macrophorin A. MacJ is also able to catalyze cyclization of yanuthone E and 7-deacetoxyyanuthone A to their corresponding macrophorins. The macJ products can be further modified by macH and macJ, as well as by the FAD-dependent monooxygenase macF, to produce additional macrophorins, including 4'-oxomacrophorin A, 4'-oxomacrophorin D and 4'-oxomacrophorin E. This is Short chain dehydrogenase macD from Penicillium terrestre.